The chain runs to 550 residues: Sterol O-acyltransferase 1 (550 aa).

Position 1 is an N-acetylmethionine (methionine 1). The segment at 1–36 (MVGEEKMSLRNRLSKSRENPEEDEDQRKPAKESLEA) is disordered. Residues 1 to 138 (MVGEEKMSLR…LDELLEVDHI (138 aa)) are Cytoplasmic-facing. Serine 8 is subject to Phosphoserine. A compositionally biased stretch (basic and acidic residues) spans 15–34 (KSRENPEEDEDQRKPAKESL). Cholesterol is bound at residue histidine 137. Residues 139 to 160 (RTIYHMFIALLILFILSTLVVD) traverse the membrane as a helical segment. Residues 161 to 180 (YIDEGRLVLEFSLLSYAFGK) lie on the Lumenal side of the membrane. The chain crosses the membrane as a helical span at residues 181 to 206 (FPTVVWTWWIMFLSTFSVPYFLFQRW). At 207-218 (ATGYSKSSHPLI) the chain is on the cytoplasmic side. The helical transmembrane segment at 219–244 (NSLFHGFLFMVFQIGILGFGPTYVVL) threads the bilayer. At 245-252 (AYTLPPAS) the chain is on the lumenal side. The chain crosses the membrane as a helical span at residues 253–276 (RFIIIFEQIRFVMKAHSFVRENVP). Over 277-319 (RVLNSAKEKSSTVPIPTVNQYLYFLFAPTLIYRDSYPRNPTVR) the chain is Cytoplasmic. Residues 320-352 (WGYVAMQFAQVFGCFFYVYYIFERLCAPLFRNI) form a helical membrane-spanning segment. The Lumenal segment spans residues 353–369 (KQEPFSARVLVLCVFNS). A helical membrane pass occupies residues 370-395 (ILPGVLILFLTFFAFLHCWLNAFAEM). At 396–443 (LRFGDRMFYKDWWNSTSYSNYYRTWNVVVHDWLYYYAYKDFLWFFSKR) the chain is on the cytoplasmic side. Residues 403-409 (FYKDWWN) carry the FYXDWWN motif motif. Residues asparagine 415, arginine 418, asparagine 421, histidine 425, tyrosine 433, lysine 445, and serine 456 each coordinate an acyl-CoA. The chain crosses the membrane as a helical span at residues 444-468 (FKSAAMLAAFAVSAVVHEYALAVCL). Histidine 460 is an active-site residue. Over 469–474 (SFFYPV) the chain is Lumenal. Residues 475 to 490 (LFVLFMFFGMAFNFIV) form a helical membrane-spanning segment. Residues 491 to 496 (NDSRKK) are Cytoplasmic-facing. The helical transmembrane segment at 497–528 (PIWNVMMWTSLFLGNGVLLCFYSQEWYARQHC) threads the bilayer. A disulfide bridge links cysteine 528 with cysteine 546. The Lumenal segment spans residues 529–550 (PLKNPTFLDYVRPRSWTCRYVF).

Belongs to the membrane-bound acyltransferase family. Sterol o-acyltransferase subfamily. May form homo- or heterodimers. Interacts with UBIAD1. In terms of tissue distribution, expressed in most tissues, but most strongly in the adrenal gland. Expressed more strongly in liver Kupffer cells than in hepatocytes.

It localises to the endoplasmic reticulum membrane. It carries out the reaction a sterol + a long-chain fatty acyl-CoA = a long-chain 3-hydroxysterol ester + CoA. The enzyme catalyses cholesterol + an acyl-CoA = a cholesterol ester + CoA. The catalysed reaction is cholesterol + (9Z)-octadecenoyl-CoA = cholesteryl (9Z-octadecenoate) + CoA. It catalyses the reaction cholesterol + hexadecanoyl-CoA = cholesteryl hexadecanoate + CoA. It carries out the reaction octadecanoyl-CoA + cholesterol = cholesteryl octadecanoate + CoA. The enzyme catalyses (9Z,12Z)-octadecadienoyl-CoA + cholesterol = cholesteryl (9Z,12Z)-octadecadienoate + CoA. The catalysed reaction is (5Z,8Z,11Z,14Z)-eicosatetraenoyl-CoA + cholesterol = cholesteryl (5Z,8Z,11Z,14Z)-eicosatetraenoate + CoA. It catalyses the reaction (9Z)-hexadecenoyl-CoA + cholesterol = cholesteryl (9Z)-hexadecenoate + CoA. It carries out the reaction (11Z)-octadecenoyl-CoA + cholesterol = cholesteryl (11Z)-octadecenoate + CoA. The enzyme catalyses (7Z)-octadecenoyl-CoA + cholesterol = cholesteryl (7Z)-octadecenoate + CoA. Its function is as follows. Catalyzes the formation of fatty acid-cholesterol esters, which are less soluble in membranes than cholesterol. Plays a role in lipoprotein assembly and dietary cholesterol absorption. Preferentially utilizes oleoyl-CoA ((9Z)-octadecenoyl-CoA) as a substrate: shows a higher activity towards an acyl-CoA substrate with a double bond at the delta-9 position (9Z) than towards saturated acyl-CoA or an unsaturated acyl-CoA with a double bond at the delta-7 (7Z) or delta-11 (11Z) positions. The protein is Sterol O-acyltransferase 1 (SOAT1) of Macaca fascicularis (Crab-eating macaque).